The following is a 687-amino-acid chain: Dictomallein (687 aa).

Disordered regions lie at residues 1 to 45 (MGNG…SRRL) and 73 to 112 (TAGG…STSA). One can recognise a Peptidase M66 domain in the interval 233–501 (PVFGTDADVQ…QAWIASRVLA (269 aa)). Histidine 393 contacts Zn(2+). Glutamate 394 is an active-site residue. Histidine 397 and histidine 403 together coordinate Zn(2+).

This sequence belongs to the dictomallein family. It depends on Zn(2+) as a cofactor.

This Burkholderia pseudomallei (strain 668) protein is Dictomallein (dtmL).